The following is a 175-amino-acid chain: MIITLSGQPGSGKTSVAKELAEKYGFVVISAGEQFRKLAAERGMTLEEFGRLAENDPSIDLAIDQRQKELSRQFPNVLVEGRLAGRTIEADMRIWLKTPLRIRAERISNRENIPVHRAYDETHAREICELSRYKKYYDIDLTDLSCYDLVIDTSKWDAKGVSSIIFKAIDELKKA.

7-15 (GQPGSGKTS) provides a ligand contact to ATP.

This sequence belongs to the cytidylate kinase family. Type 2 subfamily.

It localises to the cytoplasm. The catalysed reaction is CMP + ATP = CDP + ADP. The enzyme catalyses dCMP + ATP = dCDP + ADP. The polypeptide is Cytidylate kinase (Methanocella arvoryzae (strain DSM 22066 / NBRC 105507 / MRE50)).